A 225-amino-acid polypeptide reads, in one-letter code: Cardiotrophin-like cytokine factor 1 (225 aa).

A signal peptide spans 1-27 (MDLRAGDSWGMLACLCTVLWHLPAVPA). An N-linked (GlcNAc...) asparagine glycan is attached at N29.

This sequence belongs to the IL-6 superfamily. As to quaternary structure, forms a heteromeric complex with cardiotrophin-like cytokine CRLF1/CLF-1; the CRLF1-CLCF1 complex is a ligand for the ciliary neurotrophic factor receptor/CNTFR. The CRLF1-CLCF1 heterodimer binds SORL1 (via N-terminal ectodomain); within this complex, the interaction is mediated predominantly by the CRLF1 moiety. The tripartite signaling complex formed by CRLF1, CLCF1 and CNTFR also binds SORL1. As to expression, expressed predominantly in lymph nodes, spleen, peripheral blood lymphocytes, bone marrow, and fetal liver.

It localises to the secreted. In terms of biological role, in complex with CRLF1, forms a heterodimeric neurotropic cytokine that plays a crucial role during neuronal development. Also stimulates B-cells. Binds to and activates the ILST/gp130 receptor. The polypeptide is Cardiotrophin-like cytokine factor 1 (CLCF1) (Homo sapiens (Human)).